Here is a 913-residue protein sequence, read N- to C-terminus: Bifunctional uridylyltransferase/uridylyl-removing enzyme (913 aa).

Positions 1–358 (MFNCDVTAID…PDEERPKKQP (358 aa)) are uridylyltransferase. Residues 359–729 (INARFNQVGD…EHRELALDAV (371 aa)) are uridylyl-removing. The HD domain occupies 476–592 (VDAHTLFLIR…TLFADLVGNV (117 aa)). 2 ACT domains span residues 730-815 (QVFV…RIPR) and 838-913 (IMSL…NDRV).

The protein belongs to the GlnD family. The cofactor is Mg(2+).

The catalysed reaction is [protein-PII]-L-tyrosine + UTP = [protein-PII]-uridylyl-L-tyrosine + diphosphate. It catalyses the reaction [protein-PII]-uridylyl-L-tyrosine + H2O = [protein-PII]-L-tyrosine + UMP + H(+). Uridylyltransferase (UTase) activity is inhibited by glutamine, while glutamine activates uridylyl-removing (UR) activity. Functionally, modifies, by uridylylation and deuridylylation, the PII regulatory proteins (GlnB and homologs), in response to the nitrogen status of the cell that GlnD senses through the glutamine level. Under low glutamine levels, catalyzes the conversion of the PII proteins and UTP to PII-UMP and PPi, while under higher glutamine levels, GlnD hydrolyzes PII-UMP to PII and UMP (deuridylylation). Thus, controls uridylylation state and activity of the PII proteins, and plays an important role in the regulation of nitrogen assimilation and metabolism. The sequence is that of Bifunctional uridylyltransferase/uridylyl-removing enzyme from Psychrobacter cryohalolentis (strain ATCC BAA-1226 / DSM 17306 / VKM B-2378 / K5).